The primary structure comprises 131 residues: Small ribosomal subunit protein bS6m (131 aa).

The protein belongs to the bacterial ribosomal protein bS6 family. In terms of assembly, component of the mitochondrial small ribosomal subunit (mt-SSU). Mature yeast 74S mitochondrial ribosomes consist of a small (37S) and a large (54S) subunit. The 37S small subunit contains a 15S ribosomal RNA (15S mt-rRNA) and 34 different proteins. The 54S large subunit contains a 21S rRNA (21S mt-rRNA) and 46 different proteins.

Its subcellular location is the mitochondrion. Functionally, component of the mitochondrial ribosome (mitoribosome), a dedicated translation machinery responsible for the synthesis of mitochondrial genome-encoded proteins, including at least some of the essential transmembrane subunits of the mitochondrial respiratory chain. The mitoribosomes are attached to the mitochondrial inner membrane and translation products are cotranslationally integrated into the membrane. This is Small ribosomal subunit protein bS6m (MRP17) from Saccharomyces cerevisiae (strain ATCC 204508 / S288c) (Baker's yeast).